The primary structure comprises 622 residues: Glucose 1,6-bisphosphate synthase (622 aa).

Arginine 73 and serine 175 together coordinate alpha-D-glucose 1,6-bisphosphate. The Phosphoserine intermediate role is filled by serine 175. The Mg(2+) site is built by serine 175, aspartate 332, and aspartate 334. Serine 175 carries the post-translational modification Phosphoserine. Alpha-D-glucose 1,6-bisphosphate-binding residues include aspartate 336, arginine 337, glutamate 434, serine 436, and lysine 448.

Belongs to the phosphohexose mutase family.

The protein resides in the cytoplasm. The protein localises to the cytosol. The enzyme catalyses (2R)-3-phospho-glyceroyl phosphate + alpha-D-glucose 1-phosphate = alpha-D-glucose 1,6-bisphosphate + (2R)-3-phosphoglycerate + H(+). The catalysed reaction is alpha-D-glucose 6-phosphate + (2R)-3-phospho-glyceroyl phosphate = alpha-D-glucose 1,6-bisphosphate + (2R)-3-phosphoglycerate + H(+). It carries out the reaction (2R)-3-phospho-glyceroyl phosphate + alpha-D-ribose 1-phosphate = alpha-D-ribose 1,5-bisphosphate + (2R)-3-phosphoglycerate + H(+). It catalyses the reaction 2-deoxy-alpha-D-ribose 1-phosphate + (2R)-3-phospho-glyceroyl phosphate = 2-deoxy-alpha-D-ribose 1,5-bisphosphate + (2R)-3-phosphoglycerate + H(+). The enzyme catalyses (2R)-3-phospho-glyceroyl phosphate + alpha-D-mannose 1-phosphate = alpha-D-mannose 1,6-bisphosphate + (2R)-3-phosphoglycerate + H(+). In terms of biological role, glucose 1,6-bisphosphate synthase using 1,3-bisphosphoglycerate as a phosphate donor and a series of 1-phosphate sugars, including glucose 1-phosphate, mannose 1-phosphate, ribose 1-phosphate and deoxyribose 1-phosphate, as acceptors. In vitro, also exhibits very low phosphopentomutase and phosphoglucomutase activity which are most probably not physiologically relevant. This is Glucose 1,6-bisphosphate synthase from Homo sapiens (Human).